The sequence spans 300 residues: Pantothenate synthetase (300 aa).

An ATP-binding site is contributed by 30–37 (MGYLHEGH). The Proton donor role is filled by His-37. (R)-pantoate is bound at residue Gln-61. Residue Gln-61 coordinates beta-alanine. Position 147–150 (147–150 (GMKD)) interacts with ATP. A (R)-pantoate-binding site is contributed by Gln-153. ATP-binding positions include Val-176 and 184 to 187 (KSSR).

This sequence belongs to the pantothenate synthetase family. Homodimer.

It is found in the cytoplasm. It catalyses the reaction (R)-pantoate + beta-alanine + ATP = (R)-pantothenate + AMP + diphosphate + H(+). It participates in cofactor biosynthesis; (R)-pantothenate biosynthesis; (R)-pantothenate from (R)-pantoate and beta-alanine: step 1/1. Functionally, catalyzes the condensation of pantoate with beta-alanine in an ATP-dependent reaction via a pantoyl-adenylate intermediate. The chain is Pantothenate synthetase from Geobacillus kaustophilus (strain HTA426).